We begin with the raw amino-acid sequence, 558 residues long: Zeta-carotene desaturase, chloroplastic/chromoplastic (558 aa).

The transit peptide at 1–27 (MASSVVFAATGSLSVPPLKSRRFYVNS) directs the protein to the chloroplast and chromoplast.

The protein belongs to the zeta carotene desaturase family. Requires decylplastoquinone as cofactor. It depends on 6-decylubiquinone as a cofactor. Highly expressed in leaves. Expressed at low levels in flowers and siliques.

The protein resides in the plastid. It localises to the chloroplast. Its subcellular location is the chromoplast. The catalysed reaction is 9,9'-di-cis-zeta-carotene + 2 a quinone = 7,7',9,9'-tetra-cis-lycopene + 2 a quinol. Its pathway is carotenoid biosynthesis; lycopene biosynthesis. Plays a crucial role in plant growth and development. Is essential for the biosynthesis of carotenoids. Carotenoids are involved in different physiological processes, including coloration, photoprotection, biosynthesis of abscisic acid (ABA) and chloroplast biogenesis. Catalyzes the conversion of zeta-carotene to lycopene via the intermediary of neurosporene. It carries out two consecutive desaturations (introduction of double bonds) at positions C-7 and C-7'. Shows stereoselectivity toward trans C15-C15'zeta-carotene double bond. The zeta-carotene produced by the phytoene desaturase PDS has a C15-C15' double bond in the cis configuration and it requires isomerization before being recognized as substrate by ZDS. The main product is 7,9,7',9'-tetra-cis-lycopene (pro-lycopene). The chain is Zeta-carotene desaturase, chloroplastic/chromoplastic from Arabidopsis thaliana (Mouse-ear cress).